The primary structure comprises 594 residues: Laccase-2 (594 aa).

Residues 1-20 (MGGIIKLSFLFCSLISLVNS) form the signal peptide. Asn67 carries N-linked (GlcNAc...) asparagine glycosylation. Plastocyanin-like domains follow at residues 70 to 183 (EALA…HSPN) and 195 to 357 (DRIV…RYTG). Cu cation contacts are provided by His117 and His119. Asn124 is a glycosylation site (N-linked (GlcNAc...) asparagine). An intrachain disulfide couples Cys138 to Cys578. His162 and His164 together coordinate Cu cation. Asn242, Asn286, Asn320, Asn358, Asn397, Asn430, Asn452, and Asn458 each carry an N-linked (GlcNAc...) asparagine glycan. The Plastocyanin-like 3 domain maps to 466 to 563 (PVNIIINNLD…KMAVVVVQPE (98 aa)). Cu cation-binding residues include His480, His483, and His485. A glycan (N-linked (GlcNAc...) asparagine) is linked at Asn508. Residues His543, Cys544, His545, and His549 each contribute to the Cu cation site.

The protein belongs to the multicopper oxidase family. The cofactor is Cu cation.

The protein localises to the secreted. The protein resides in the cell wall. The enzyme catalyses 4 hydroquinone + O2 = 4 benzosemiquinone + 2 H2O. Its function is as follows. Laccase that catalyzes the oxidation of certain aromatic compounds, including L-dopa, to quinones, which then polymerize to melanin. Able to oxidize a wide variety of aromatic diphenol and diamino groups in the ortho, meta, and para positions but not monophenolic groups such as in phenol, tyramine, or tyrosine. Plays an important role in virulence. Plays a role in dissemination to extrapulmonary sites but is not involved in pulmonary growth or in elicitation of cellular immune responses in the lung. The chain is Laccase-2 (LAC2) from Cryptococcus neoformans var. grubii serotype A (strain H99 / ATCC 208821 / CBS 10515 / FGSC 9487) (Filobasidiella neoformans var. grubii).